Here is a 114-residue protein sequence, read N- to C-terminus: UPF0102 protein HPSH_02690 (114 aa).

It belongs to the UPF0102 family.

This chain is UPF0102 protein HPSH_02690, found in Helicobacter pylori (strain Shi470).